Consider the following 2419-residue polypeptide: Telomere-associated protein RIF1 (2419 aa).

Disordered stretches follow at residues 1-24 and 373-408; these read MTAP…VPPG and SIPS…SPRG. A compositionally biased stretch (polar residues) spans 373–385; the sequence is SIPSPQGNSSRGS. Residues serine 385, serine 391, serine 779, serine 976, and serine 1005 each carry the phosphoserine modification. Threonine 1044 is modified (phosphothreonine). Low complexity predominate over residues 1184-1198; that stretch reads SSSTETSVVSSSSVS. Disordered stretches follow at residues 1184 to 1594 and 1613 to 1637; these read SSST…QAVP and RVIL…EKSK. Composition is skewed to polar residues over residues 1199-1217 and 1228-1255; these read NATF…QTFI and RPFS…TNTD. The residue at position 1215 (threonine 1215) is a Phosphothreonine. 2 positions are modified to phosphoserine: serine 1231 and serine 1233. A compositionally biased stretch (basic and acidic residues) spans 1263-1272; that stretch reads REVTNSKSDS. Residues 1289 to 1302 are compositionally biased toward polar residues; that stretch reads AEQSVTKKSKPSLT. Residues 1323–1345 are compositionally biased toward basic and acidic residues; sequence HVSENDDHPSEATLEHKDGDPKP. Phosphoserine occurs at positions 1407, 1439, 1457, and 1498. Positions 1416–1455 are enriched in basic and acidic residues; the sequence is SQERESGQQKKERRKEEEKIISKSPLRIKDDKLPTQKLTD. The span at 1457 to 1467 shows a compositional bias: polar residues; that stretch reads SPIQENLTEKG. Position 1504 is a phosphothreonine (threonine 1504). The segment covering 1507–1516 has biased composition (basic and acidic residues); that stretch reads NLDKSSEKPL. The span at 1525–1537 shows a compositional bias: polar residues; sequence RRASQGLISAVEN. Residues serine 1528, serine 1538, serine 1540, serine 1542, and serine 1550 each carry the phosphoserine modification. Positions 1551–1560 are enriched in basic residues; sequence RKKRSGKWKN. Phosphoserine is present on residues serine 1562 and serine 1565. Over residues 1572–1581 the composition is skewed to basic and acidic residues; sequence EEKKAEEEVM. Phosphoserine occurs at positions 1680 and 1683. Threonine 1780 carries the post-translational modification Phosphothreonine. A Phosphoserine modification is found at serine 1784. Residues 1812-1836 form a disordered region; that stretch reads ASEAVSEIQGPCSENHSPAEDPGLS. Serine 1842 is subject to Phosphoserine. Residues 1882–2419 are interaction with condensed chromosomes in telophase; it reads DAFVAADSEK…RWRSPAHENS (538 aa). Disordered stretches follow at residues 1890–1914 and 1929–1983; these read EKST…ECEA and FNSG…AQMS. Residues serine 1931, serine 2094, serine 2109, serine 2121, serine 2125, serine 2144, serine 2153, serine 2208, serine 2287, serine 2341, serine 2413, and serine 2419 each carry the phosphoserine modification. Residues 2119-2394 form an interaction with ERCC6 region; that stretch reads VWSPLASPST…TGSQLFEMHE (276 aa). The interval 2182 to 2212 is disordered; it reads SPIIKSVKTSPTSHSKHNTTSAKGFLSPGSQ. A compositionally biased stretch (polar residues) spans 2189 to 2212; it reads KTSPTSHSKHNTTSAKGFLSPGSQ.

Belongs to the RIF1 family. As to quaternary structure, interacts with TP53BP1 (when phosphorylated by ATM). May interact with TRF2. Interacts with SHLD2. Interacts with ERCC6 (via WHD region). Interacts with ASTE1. Expressed in Sertoli cells, prospermatagonia, early primary spermatocytes, and in oocytes at all stages of their growth. Expressed in embryonic stem (ES) and embryonic germ (EG) cells: expression is lost upon differentiation.

The protein localises to the nucleus. It is found in the chromosome. It localises to the telomere. Its subcellular location is the cytoplasm. The protein resides in the cytoskeleton. The protein localises to the spindle. In terms of biological role, key regulator of TP53BP1 that plays a key role in the repair of double-strand DNA breaks (DSBs) in response to DNA damage: acts by promoting non-homologous end joining (NHEJ)-mediated repair of DSBs. In response to DNA damage, interacts with ATM-phosphorylated TP53BP1. Interaction with TP53BP1 leads to dissociate the interaction between NUDT16L1/TIRR and TP53BP1, thereby unmasking the tandem Tudor-like domain of TP53BP1 and allowing recruitment to DNA DSBs. Once recruited to DSBs, RIF1 and TP53BP1 act by promoting NHEJ-mediated repair of DSBs. In the same time, RIF1 and TP53BP1 specifically counteract the function of BRCA1 by blocking DSBs resection via homologous recombination (HR) during G1 phase. Also required for immunoglobulin class-switch recombination (CSR) during antibody genesis, a process that involves the generation of DNA DSBs. Promotes NHEJ of dysfunctional telomeres. This Mus musculus (Mouse) protein is Telomere-associated protein RIF1.